Here is a 225-residue protein sequence, read N- to C-terminus: Thymidylate kinase (225 aa).

15-22 serves as a coordination point for ATP; it reads GGEGSGKS.

Belongs to the thymidylate kinase family.

The enzyme catalyses dTMP + ATP = dTDP + ADP. In terms of biological role, phosphorylation of dTMP to form dTDP in both de novo and salvage pathways of dTTP synthesis. The polypeptide is Thymidylate kinase (Protochlamydia amoebophila (strain UWE25)).